The chain runs to 161 residues: Protein ilm1 (161 aa).

The Cytoplasmic portion of the chain corresponds to 1–6 (MLFSFR). A helical transmembrane segment spans residues 7–27 (AIVLFYCCMLTFAGIGFLWNP). At 28–56 (KFVVESGLVALIGASMEVKPLIVTQDNLS) the chain is on the lumenal side. A helical transmembrane segment spans residues 57–77 (TLALSGLVFLILGMIYTISLL). Residues 78–81 (QSNF) lie on the Cytoplasmic side of the membrane. The helical transmembrane segment at 82-102 (LFFSGITPIRAIFDFILTGFI) threads the bilayer. Topologically, residues 103 to 112 (YLKKEHIASN) are lumenal. Residues 113-133 (SLTFTFAFCDLMWQFWMFAAM) traverse the membrane as a helical segment. The Cytoplasmic portion of the chain corresponds to 134-161 (SEERAKYLKNQKKAEELAARKAREVEES).

It belongs to the ILM1 family.

The protein resides in the endoplasmic reticulum. It localises to the membrane. This Schizosaccharomyces pombe (strain 972 / ATCC 24843) (Fission yeast) protein is Protein ilm1.